The primary structure comprises 261 residues: Undecaprenyl-diphosphatase 2 (261 aa).

8 helical membrane passes run 1-21, 38-58, 75-95, 103-123, 138-158, 178-198, 212-232, and 240-260; these read MLEA…PISS, PGKT…CVVF, FAFA…GATL, LESP…ILVI, MSPA…VPGV, AAEF…AYSL, LIAL…KGFI, and FAPF…LILM.

Belongs to the UppP family.

Its subcellular location is the cell inner membrane. It carries out the reaction di-trans,octa-cis-undecaprenyl diphosphate + H2O = di-trans,octa-cis-undecaprenyl phosphate + phosphate + H(+). Functionally, catalyzes the dephosphorylation of undecaprenyl diphosphate (UPP). Confers resistance to bacitracin. This chain is Undecaprenyl-diphosphatase 2, found in Paramagnetospirillum magneticum (strain ATCC 700264 / AMB-1) (Magnetospirillum magneticum).